The chain runs to 346 residues: Enkurin domain-containing protein 1 (346 aa).

Disordered regions lie at residues 1-24 (MCEG…DYYR), 88-107 (SGVS…NLRR), and 113-132 (RRFQ…PLKA). The residue at position 91 (Ser91) is a Phosphoserine. 2 stretches are compositionally biased toward basic and acidic residues: residues 98-107 (KDHEKENLRR) and 113-125 (RRFQ…REQG). A Phosphoserine modification is found at Ser136. The Enkurin domain maps to 251–343 (ERRDLWRKEA…IFSRPKVFVK (93 aa)). The tract at residues 259–280 (EAEARQRSQPDPSMPPGHTLMP) is disordered.

In terms of assembly, interacts with alpha-tubulin. Interacts (via central region) with CCP110 (via N-terminal region); competes with CEP97 for binding to CCP110. Widely expressed with highest levels in testis and lung.

Its subcellular location is the cytoplasm. It localises to the cytoskeleton. The protein resides in the microtubule organizing center. It is found in the centrosome. The protein localises to the centriole. Its subcellular location is the cilium basal body. It localises to the cell projection. The protein resides in the cilium. It is found in the spindle. The protein localises to the spindle pole. Its subcellular location is the cilium axoneme. In terms of biological role, microtubule-binding protein which regulates microtubule organization and stability. Promotes the stability of astral microtubules and facilitates the proper orientation of the mitotic spindle. This allows the oriented division of basal keratinocytes and contributes to epidermal stratification. Required for the assembly of both primary and motile cilia. Destabilizes the interaction between CCP110 and CEP97 by competing with CEP97 for binding to CCP110 which promotes the removal of CCP110 and CEP97 from the mother centriole and allows the initiation of ciliogenesis. In Mus musculus (Mouse), this protein is Enkurin domain-containing protein 1 (Enkd1).